Here is an 89-residue protein sequence, read N- to C-terminus: Small ribosomal subunit protein uS15 (89 aa).

Belongs to the universal ribosomal protein uS15 family. In terms of assembly, part of the 30S ribosomal subunit. Forms a bridge to the 50S subunit in the 70S ribosome, contacting the 23S rRNA.

Functionally, one of the primary rRNA binding proteins, it binds directly to 16S rRNA where it helps nucleate assembly of the platform of the 30S subunit by binding and bridging several RNA helices of the 16S rRNA. In terms of biological role, forms an intersubunit bridge (bridge B4) with the 23S rRNA of the 50S subunit in the ribosome. This Bacillus pumilus (strain SAFR-032) protein is Small ribosomal subunit protein uS15.